Reading from the N-terminus, the 78-residue chain is U-scoloptoxin(04)-Er1a (78 aa).

An N-terminal signal peptide occupies residues 1 to 24; the sequence is MTRHLIFAAVLLVCLFVCWNAIGA. Residues 25–28 constitute a propeptide that is removed on maturation; the sequence is QDAR.

The protein belongs to the scoloptoxin-04 family. Post-translationally, contains 2 disulfide bonds. Expressed by the venom gland.

It is found in the secreted. This chain is U-scoloptoxin(04)-Er1a, found in Ethmostigmus rubripes (Giant centipede).